Consider the following 206-residue polypeptide: MELNVKTLEGTDAGTVSLSDAIFGLEPRQDIIARMVRWQLAKKQQGTHKTKTRAEVSRTGAKMYKQKGTGRARHHSARAPQFRGGGKAHGPVVRSHEHDLPKKVRALALRHALSAKFKADELIIVDQLVAADAKTKAAVGVFEALGLKNALVIGGVELDVNFKLAAANIPNIDVLPVQGINVYDILRRGKLVLSKAAVEALEERFK.

The disordered stretch occupies residues 63-96; sequence MYKQKGTGRARHHSARAPQFRGGGKAHGPVVRSH. Residues 64 to 77 are compositionally biased toward basic residues; that stretch reads YKQKGTGRARHHSA.

This sequence belongs to the universal ribosomal protein uL4 family. As to quaternary structure, part of the 50S ribosomal subunit.

Its function is as follows. One of the primary rRNA binding proteins, this protein initially binds near the 5'-end of the 23S rRNA. It is important during the early stages of 50S assembly. It makes multiple contacts with different domains of the 23S rRNA in the assembled 50S subunit and ribosome. In terms of biological role, forms part of the polypeptide exit tunnel. This chain is Large ribosomal subunit protein uL4, found in Allorhizobium ampelinum (strain ATCC BAA-846 / DSM 112012 / S4) (Agrobacterium vitis (strain S4)).